The sequence spans 259 residues: Glucosamine-6-phosphate deaminase (259 aa).

Asp66 (proton acceptor; for enolization step) is an active-site residue. The active-site For ring-opening step is Asp135. His137 serves as the catalytic Proton acceptor; for ring-opening step. Glu142 serves as the catalytic For ring-opening step.

This sequence belongs to the glucosamine/galactosamine-6-phosphate isomerase family. NagB subfamily.

The enzyme catalyses alpha-D-glucosamine 6-phosphate + H2O = beta-D-fructose 6-phosphate + NH4(+). It functions in the pathway amino-sugar metabolism; N-acetylneuraminate degradation; D-fructose 6-phosphate from N-acetylneuraminate: step 5/5. Its function is as follows. Catalyzes the reversible isomerization-deamination of glucosamine 6-phosphate (GlcN6P) to form fructose 6-phosphate (Fru6P) and ammonium ion. This Rhodococcus jostii (strain RHA1) protein is Glucosamine-6-phosphate deaminase.